We begin with the raw amino-acid sequence, 114 residues long: UPF0102 protein Shew_0226 (114 aa).

The protein belongs to the UPF0102 family.

The protein is UPF0102 protein Shew_0226 of Shewanella loihica (strain ATCC BAA-1088 / PV-4).